The sequence spans 140 residues: Ribosome-binding factor A (140 aa).

The protein belongs to the RbfA family. As to quaternary structure, monomer. Binds 30S ribosomal subunits, but not 50S ribosomal subunits or 70S ribosomes.

The protein resides in the cytoplasm. One of several proteins that assist in the late maturation steps of the functional core of the 30S ribosomal subunit. Associates with free 30S ribosomal subunits (but not with 30S subunits that are part of 70S ribosomes or polysomes). Required for efficient processing of 16S rRNA. May interact with the 5'-terminal helix region of 16S rRNA. The protein is Ribosome-binding factor A of Cereibacter sphaeroides (strain ATCC 17025 / ATH 2.4.3) (Rhodobacter sphaeroides).